A 1823-amino-acid polypeptide reads, in one-letter code: Bromodomain-containing protein DDB_G0280777 (1823 aa).

2 disordered regions span residues 44–83 and 200–281; these read DNNNNKRFNENGNQINQIDFNSNKEEEKEEKEEKEKEEDE and LKQT…RTTS. The span at 65–77 shows a compositional bias: basic and acidic residues; it reads SNKEEEKEEKEEK. Residues 210–224 are compositionally biased toward basic residues; sequence KRRNQQHQNLLKKQK. Residues 225–250 are compositionally biased toward basic and acidic residues; the sequence is IQKEKEEREQKEKEQKEKEQKEKEEQ. The span at 251–262 shows a compositional bias: low complexity; it reads QQQLFLLQQQQQ. The 108-residue stretch at 306–413 folds into the Bromo domain; that stretch reads EAQEEMYDQL…KKSKDLMKNV (108 aa). Disordered stretches follow at residues 429 to 654, 753 to 781, 855 to 886, 949 to 993, 1055 to 1079, 1190 to 1386, 1453 to 1477, and 1679 to 1823; these read ENKN…EEQT, NCNNNNNNNDNNNNNNIDNDNDNNNNNSL, INDNDDDNNNNNNNNNNNNNNNNNNNNNNNKP, NSSK…DEDF, LPNNKSTTTQTTPTTQLQPPPPPPS, IDPK…IQAS, QLQQQTRQPSQPQTPQMQSQPQTPQ, and QQQQ…QKKQ. Low complexity-rich tracts occupy residues 432–486, 494–511, 520–555, and 570–579; these read NNNN…NTPL, CSPSTISTVSSTPTTPQS, QQQQQQQTQAQQQPTSNSPRNTTTTTTTITSPISPR, and SSSSLSSSSL. Over residues 580–590 the composition is skewed to polar residues; that stretch reads ALNSQNENGVN. Over residues 601-614 the composition is skewed to basic and acidic residues; sequence MESEESTNVKKEEN. A compositionally biased stretch (acidic residues) spans 631 to 643; the sequence is EGEEQQEQEDEEQ. 5 stretches are compositionally biased toward low complexity: residues 753–779, 863–884, 949–958, 1055–1071, and 1205–1378; these read NCNNNNNNNDNNNNNNIDNDNDNNNNN, NNNNNNNNNNNNNNNNNNNNNN, NSSKSNNNSN, LPNNKSTTTQTTPTTQL, and NNNN…NNNN. Residues 1679-1705 are compositionally biased toward low complexity; that stretch reads QQQQPQQQQQQPQQQPQQQPQQQQQPQ. Basic and acidic residues-rich tracts occupy residues 1716-1737 and 1744-1755; these read PKEKDKEREKEKEREREKEKDR and KTESKKESKKSL. Composition is skewed to low complexity over residues 1756 to 1767 and 1789 to 1806; these read NDSSNSDINTSV and SSKQPQTTQSNTTTTQDS. Residues 1813–1823 are compositionally biased toward basic residues; sequence KKKRGRPQKKQ.

This is Bromodomain-containing protein DDB_G0280777 from Dictyostelium discoideum (Social amoeba).